Consider the following 303-residue polypeptide: Probable cell division protein WhiA (303 aa).

The H-T-H motif DNA-binding region spans 272–303; that stretch reads SIQQLADSLSTPLTKSGVNHRLRKINKIADEL.

The protein belongs to the WhiA family.

In terms of biological role, involved in cell division and chromosome segregation. This is Probable cell division protein WhiA from Streptococcus pneumoniae (strain Hungary19A-6).